Reading from the N-terminus, the 234-residue chain is Leucyl/phenylalanyl-tRNA--protein transferase (234 aa).

The protein belongs to the L/F-transferase family.

It is found in the cytoplasm. It carries out the reaction N-terminal L-lysyl-[protein] + L-leucyl-tRNA(Leu) = N-terminal L-leucyl-L-lysyl-[protein] + tRNA(Leu) + H(+). The catalysed reaction is N-terminal L-arginyl-[protein] + L-leucyl-tRNA(Leu) = N-terminal L-leucyl-L-arginyl-[protein] + tRNA(Leu) + H(+). It catalyses the reaction L-phenylalanyl-tRNA(Phe) + an N-terminal L-alpha-aminoacyl-[protein] = an N-terminal L-phenylalanyl-L-alpha-aminoacyl-[protein] + tRNA(Phe). In terms of biological role, functions in the N-end rule pathway of protein degradation where it conjugates Leu, Phe and, less efficiently, Met from aminoacyl-tRNAs to the N-termini of proteins containing an N-terminal arginine or lysine. This Escherichia coli O45:K1 (strain S88 / ExPEC) protein is Leucyl/phenylalanyl-tRNA--protein transferase.